We begin with the raw amino-acid sequence, 233 residues long: MAHPGRRGYDNREIVLKYIHYKLSQRGYDWAAGEDRPPVPPAPAPAAAPAAVAAAGASSHHRPEPPGSAAASEVPPAEGLRPAPPGVHLALRQAGDEFSRRYQRDFAQMSGQLHLTPFTAHGRFVAVVEELFRDGVNWGRIVAFFEFGGVMCVESVNREMSPLVDNIATWMTEYLNRHLHNWIQDNGGWDAFVELYGNSMRPLFDFSWISLKTILSLVLVGACITLGAYLGHK.

A BH4 motif is present at residues 10–30 (DNREIVLKYIHYKLSQRGYDW). Residues 32–86 (AGEDRPPVPPAPAPAAAPAAVAAAGASSHHRPEPPGSAAASEVPPAEGLRPAPPG) are disordered. Residues 87-101 (VHLALRQAGDEFSRR) carry the BH3 motif. The BH1 signature appears at 130 to 149 (ELFRDGVNWGRIVAFFEFGG). Positions 181–196 (NWIQDNGGWDAFVELY) match the BH2 motif. A helical membrane pass occupies residues 208–228 (WISLKTILSLVLVGACITLGA).

Belongs to the Bcl-2 family. As to quaternary structure, forms homodimers, and heterodimers with BAX, BAD, BAK and Bcl-X(L). Heterodimerization with BAX requires intact BH1 and BH2 motifs, and is necessary for anti-apoptotic activity. Also interacts with APAF1 and RAF-1. In adult chicken expressed, in thymus, spleen, kidney, heart, ovary and brain, with the highest levels in the thymus. In the embryo, highly levels expressed in all tissues with high levels in the bursa of Fabricius.

The protein resides in the mitochondrion outer membrane. It localises to the nucleus membrane. It is found in the endoplasmic reticulum membrane. Its subcellular location is the cytoplasm. Its function is as follows. Suppresses apoptosis in a variety of cell systems including factor-dependent lymphohematopoietic and neural cells. Regulates cell death by controlling the mitochondrial membrane permeability. Appears to function in a feedback loop system with caspases. Inhibits caspase activity either by preventing the release of cytochrome c from the mitochondria and/or by binding to the apoptosis-activating factor (APAF-1). The polypeptide is Apoptosis regulator Bcl-2 (BCL2) (Gallus gallus (Chicken)).